Here is a 159-residue protein sequence, read N- to C-terminus: Ribosomal RNA large subunit methyltransferase H (159 aa).

S-adenosyl-L-methionine-binding positions include L76, G108, and 127-132; that span reads FSKMTF.

Belongs to the RNA methyltransferase RlmH family. In terms of assembly, homodimer.

It is found in the cytoplasm. The enzyme catalyses pseudouridine(1915) in 23S rRNA + S-adenosyl-L-methionine = N(3)-methylpseudouridine(1915) in 23S rRNA + S-adenosyl-L-homocysteine + H(+). Its function is as follows. Specifically methylates the pseudouridine at position 1915 (m3Psi1915) in 23S rRNA. This chain is Ribosomal RNA large subunit methyltransferase H, found in Bifidobacterium longum subsp. infantis (strain ATCC 15697 / DSM 20088 / JCM 1222 / NCTC 11817 / S12).